A 353-amino-acid chain; its full sequence is MSAISDRIFVQEHLAREHEASELSPEEAERLKAEIKELLVQEDAVLVAHYYTDPLLQALAEETGGCVADSLEMARFGNQHPASTLMVCGVRFMGETAKILNPEKTVLMPTLEATCSLDIGCPVEEFSAFCDEHSDRTVVVYANTSAAVKARADWVVTSSIALDIVEYLHERGEKIIWAPDKHLGGYVKNKTGADVLLWDGSCIVHEEFKSKGLSDLKQLYPDAAVLVHPESPEAVVEMADVVGSTSQLINAVKSMSNEQFIVATDAGIFYKMQQMAPEKTLIEAPTAGNGATCRSCAHCPWMAMNGLENLRDVLISKRQEIIVEADLREKALIPLQRMLNFSKERQMAVKGNA.

His-49 and Ser-70 together coordinate iminosuccinate. Position 115 (Cys-115) interacts with [4Fe-4S] cluster. Residues 141–143 and Ser-158 each bind iminosuccinate; that span reads YAN. Cys-202 lines the [4Fe-4S] cluster pocket. Iminosuccinate-binding positions include 228-230 and Thr-245; that span reads HPE. Cys-299 lines the [4Fe-4S] cluster pocket.

This sequence belongs to the quinolinate synthase family. Type 1 subfamily. Requires [4Fe-4S] cluster as cofactor.

The protein resides in the cytoplasm. The catalysed reaction is iminosuccinate + dihydroxyacetone phosphate = quinolinate + phosphate + 2 H2O + H(+). It functions in the pathway cofactor biosynthesis; NAD(+) biosynthesis; quinolinate from iminoaspartate: step 1/1. Functionally, catalyzes the condensation of iminoaspartate with dihydroxyacetone phosphate to form quinolinate. The chain is Quinolinate synthase from Hahella chejuensis (strain KCTC 2396).